The following is a 212-amino-acid chain: Adenylate kinase (212 aa).

10 to 15 serves as a coordination point for ATP; it reads GAGKGT. The interval 30–59 is NMP; sequence STGDMFRAAMANQTEMGRLAKSYIDKGELV. AMP-binding positions include Thr-31, Arg-36, 57 to 59, 86 to 89, and Gln-93; these read ELV and GYPR. An LID region spans residues 127-159; the sequence is GRIINRKTGETFHKVFNPPVDYKEEDYYQREDD. Residues Arg-128 and 137–138 contribute to the ATP site; that span reads TF. Positions 156 and 167 each coordinate AMP. Position 195 (Gln-195) interacts with ATP.

This sequence belongs to the adenylate kinase family. Monomer.

The protein resides in the cytoplasm. The catalysed reaction is AMP + ATP = 2 ADP. The protein operates within purine metabolism; AMP biosynthesis via salvage pathway; AMP from ADP: step 1/1. Functionally, catalyzes the reversible transfer of the terminal phosphate group between ATP and AMP. Plays an important role in cellular energy homeostasis and in adenine nucleotide metabolism. The sequence is that of Adenylate kinase from Streptococcus pyogenes serotype M3 (strain ATCC BAA-595 / MGAS315).